The following is a 622-amino-acid chain: 1-deoxy-D-xylulose-5-phosphate synthase (622 aa).

Thiamine diphosphate is bound by residues His80 and 121–123; that span reads GHS. Asp152 is a Mg(2+) binding site. Thiamine diphosphate contacts are provided by residues 153–154, Asn181, Tyr288, and Glu370; that span reads GA. Residue Asn181 coordinates Mg(2+).

It belongs to the transketolase family. DXPS subfamily. In terms of assembly, homodimer. The cofactor is Mg(2+). Thiamine diphosphate is required as a cofactor.

It carries out the reaction D-glyceraldehyde 3-phosphate + pyruvate + H(+) = 1-deoxy-D-xylulose 5-phosphate + CO2. The protein operates within metabolic intermediate biosynthesis; 1-deoxy-D-xylulose 5-phosphate biosynthesis; 1-deoxy-D-xylulose 5-phosphate from D-glyceraldehyde 3-phosphate and pyruvate: step 1/1. Its function is as follows. Catalyzes the acyloin condensation reaction between C atoms 2 and 3 of pyruvate and glyceraldehyde 3-phosphate to yield 1-deoxy-D-xylulose-5-phosphate (DXP). This is 1-deoxy-D-xylulose-5-phosphate synthase from Shewanella denitrificans (strain OS217 / ATCC BAA-1090 / DSM 15013).